The following is a 212-amino-acid chain: ATP-dependent dethiobiotin synthetase BioD (212 aa).

12–17 (DCGKTF) is a binding site for ATP. A Mg(2+)-binding site is contributed by Thr-16. Lys-33 is an active-site residue. Residue Ser-37 participates in substrate binding. ATP is bound by residues Asp-50, 110–113 (EGAG), and 170–171 (NC). Positions 50 and 110 each coordinate Mg(2+).

It belongs to the dethiobiotin synthetase family. Homodimer. Mg(2+) is required as a cofactor.

Its subcellular location is the cytoplasm. The enzyme catalyses (7R,8S)-7,8-diammoniononanoate + CO2 + ATP = (4R,5S)-dethiobiotin + ADP + phosphate + 3 H(+). Its pathway is cofactor biosynthesis; biotin biosynthesis; biotin from 7,8-diaminononanoate: step 1/2. In terms of biological role, catalyzes a mechanistically unusual reaction, the ATP-dependent insertion of CO2 between the N7 and N8 nitrogen atoms of 7,8-diaminopelargonic acid (DAPA, also called 7,8-diammoniononanoate) to form a ureido ring. In Legionella pneumophila (strain Paris), this protein is ATP-dependent dethiobiotin synthetase BioD.